The primary structure comprises 166 residues: MAQTSSYFMLISCLMFLSQSQGQEAQTELPQARISCPEGTNAYRSYCYYFNEDRETWVDADLYCQNMNSGNLVSVLTQAEGAFVASLIKESGTDDFNVWIGLHDPKKNRRWHWSSGSLVSYKSWGIGAPSSVNPGYCVSLTSSTGFQKWKDVPCEDKFSFVCKFKN.

The signal sequence occupies residues 1-22 (MAQTSSYFMLISCLMFLSQSQG). Glutamine 23 bears the Pyrrolidone carboxylic acid mark. A glycan (O-linked (GalNAc) threonine) is linked at threonine 27. The region spanning 34–164 (ISCPEGTNAY…EDKFSFVCKF (131 aa)) is the C-type lectin domain. 3 cysteine pairs are disulfide-bonded: cysteine 36–cysteine 47, cysteine 64–cysteine 162, and cysteine 137–cysteine 154.

The composition of the O-linked carbohydrate on Thr-27 is complex and varied. In the crystallographic structure, the attached sugar appears to be N-acetylglucosamine, typical of an intracellular protein, rather than N-acetylgalactosamine. As to expression, in pancreatic acinar cells and, in lower levels, in brain. Enhanced expression of PSP-related transcripts and intraneuronal accumulation of PSP-like proteins is found in brain from Alzheimer disease and Down syndrome patients.

The protein resides in the secreted. In terms of biological role, might act as an inhibitor of spontaneous calcium carbonate precipitation. May be associated with neuronal sprouting in brain, and with brain and pancreas regeneration. The polypeptide is Lithostathine-1-alpha (REG1A) (Homo sapiens (Human)).